A 168-amino-acid chain; its full sequence is MSLNRSEKEAVINEVTSLAAKAQTLVIAEYRGITVADMTKLRVEARSKGVSLSVLKNTLARRAVAGSQFDVVADQMTGPLIYGFSEDAVAAAKVVADFAKTNDKLVIRGGAFAGKALDVNGVKQLANIPTKEVLLAQLCGLLMSPISRTAVVLGALAAKKGEGEPAAA.

Belongs to the universal ribosomal protein uL10 family. Part of the ribosomal stalk of the 50S ribosomal subunit. The N-terminus interacts with L11 and the large rRNA to form the base of the stalk. The C-terminus forms an elongated spine to which L12 dimers bind in a sequential fashion forming a multimeric L10(L12)X complex.

In terms of biological role, forms part of the ribosomal stalk, playing a central role in the interaction of the ribosome with GTP-bound translation factors. In Acidovorax ebreus (strain TPSY) (Diaphorobacter sp. (strain TPSY)), this protein is Large ribosomal subunit protein uL10.